A 374-amino-acid polypeptide reads, in one-letter code: MAIRKKSNKNPPVLSHEFVLQNHADIVSCLAMLFLLGLMFEITAKGAIIFVALQYNVTRPATEEQAAESASLYYYGIKDLATVFFYMLVAIIVHAIIQEYVLDKINRRMHFSKTKHSKFNESGQLSAFYLFACVWGTFILVSENYISDPTILWRAYPHNLMTFQMKFFYISQLAYWLHAFPELYFQKTKKEDIPRQLVYIGLYLFHIAGAYLLNLNHLGLVLLVLHYFVEFLFHISRLFYFSDEKYQKGFSLWAVLFVLGRLLTLILSVLTVGFGLARAENQKLDFSTGNFNVLAVRIAVLASICITQAFMMWKFINFQLRRWREHSAFQAPPVKRKPAVTKGRSSRKGTENGVNGTVTSNGADSPRSRKEKSS.

The Cytoplasmic segment spans residues 1 to 32 (MAIRKKSNKNPPVLSHEFVLQNHADIVSCLAM). The chain crosses the membrane as a helical span at residues 33 to 53 (LFLLGLMFEITAKGAIIFVAL). Topologically, residues 54 to 81 (QYNVTRPATEEQAAESASLYYYGIKDLA) are lumenal. N-linked (GlcNAc...) asparagine glycosylation is present at Asn56. The chain crosses the membrane as a helical span at residues 82–102 (TVFFYMLVAIIVHAIIQEYVL). Over 103–121 (DKINRRMHFSKTKHSKFNE) the chain is Cytoplasmic. In terms of domain architecture, TLC spans 117 to 326 (SKFNESGQLS…NFQLRRWREH (210 aa)). The helical transmembrane segment at 122–142 (SGQLSAFYLFACVWGTFILVS) threads the bilayer. The Lumenal portion of the chain corresponds to 143-159 (ENYISDPTILWRAYPHN). Residues 160–180 (LMTFQMKFFYISQLAYWLHAF) traverse the membrane as a helical segment. Residues 181 to 192 (PELYFQKTKKED) lie on the Cytoplasmic side of the membrane. The helical transmembrane segment at 193-213 (IPRQLVYIGLYLFHIAGAYLL) threads the bilayer. Residue Asn214 is a topological domain, lumenal. Residues 215 to 235 (LNHLGLVLLVLHYFVEFLFHI) form a helical membrane-spanning segment. Residues 236–251 (SRLFYFSDEKYQKGFS) are Cytoplasmic-facing. The helical transmembrane segment at 252–272 (LWAVLFVLGRLLTLILSVLTV) threads the bilayer. The Lumenal portion of the chain corresponds to 273-297 (GFGLARAENQKLDFSTGNFNVLAVR). Residues 298-318 (IAVLASICITQAFMMWKFINF) form a helical membrane-spanning segment. The Cytoplasmic segment spans residues 319 to 374 (QLRRWREHSAFQAPPVKRKPAVTKGRSSRKGTENGVNGTVTSNGADSPRSRKEKSS). The tract at residues 333 to 374 (PVKRKPAVTKGRSSRKGTENGVNGTVTSNGADSPRSRKEKSS) is disordered. A compositionally biased stretch (basic residues) spans 334-347 (VKRKPAVTKGRSSR). The span at 352–363 (NGVNGTVTSNGA) shows a compositional bias: polar residues. A Phosphoserine modification is found at Ser365.

This sequence belongs to the TRAM family. Interacts with SEC61B. May interact with Derlin-1/DERL1. In terms of processing, N-glycosylated.

Its subcellular location is the endoplasmic reticulum membrane. Its function is as follows. Involved in the translocation of nascent protein chains into or through the endoplasmic reticulum (ER) membrane by facilitating the proper chain positioning at the SEC61 channel. Regulates the exposure of nascent secretory protein chain to the cytosol during translocation into the ER. May affect the phospholipid bilayer in the vicinity of the lateral gate of the SEC61 channel, thereby facilitating ER protein transport. Intimately associates with transmembrane (TM) domain of nascent membrane proteins during the entire integration process into the ER membrane. Associates with the second TM domain of G-protein-coupled receptor opsin/OPSD nascent chain in the ER membrane, which may facilitate its integration into the membrane. Under conditions of ER stress, participates in the disposal of misfolded ER membrane proteins during the unfolded protein response (UPR), an integrated stress response (ISR) pathway, by selectively retrotranslocating misfolded ER-membrane proteins from the ER into the cytosol where they are ubiquitinated and degraded by the proteasome. In Rattus norvegicus (Rat), this protein is Translocating chain-associated membrane protein 1.